A 23-amino-acid polypeptide reads, in one-letter code: Ascaphin-1 (23 aa).

At Asn23 the chain carries Asparagine amide.

As to expression, expressed by the skin glands.

Its subcellular location is the secreted. Antimicrobial peptide that shows higher potency against Gram-negative bacteria than against Gram-positive bacteria. Has a very week hemolytic activity. The polypeptide is Ascaphin-1 (Ascaphus truei (Coastal tailed frog)).